Reading from the N-terminus, the 855-residue chain is Probable inactive ATP-dependent zinc metalloprotease FTSHI 4, chloroplastic (855 aa).

The transit peptide at 1–78 directs the protein to the chloroplast; that stretch reads MTFYISSSLT…SFESTESSVS (78 aa). The helical transmembrane segment at 242-262 threads the bilayer; the sequence is VATFVVWSMRLALFVSLYVWI. 356–363 is a binding site for ATP; that stretch reads GPPGTGKT.

The protein belongs to the AAA ATPase family. Homooligomer. Interacts with FtsHi2. Ubiquitous but preferentially expressed in young leaves.

The protein localises to the plastid. It is found in the chloroplast thylakoid membrane. Functions in chloroplast biogenesis and chloroplast division. Required for plastid development during embryogenesis. Might be involved in chaperone functions or play a structural role in the thylakoid FtsH complex. This chain is Probable inactive ATP-dependent zinc metalloprotease FTSHI 4, chloroplastic, found in Arabidopsis thaliana (Mouse-ear cress).